The primary structure comprises 489 residues: Putative L,D-transpeptidase HI_1667 (489 aa).

The chain crosses the membrane as a helical span at residues 10–29 (LSLFALSLSMMMSGCVLVGL). Positions 254–433 (NGIFVNIPSY…ETRKNTVLAS (180 aa)) constitute a L,D-TPase catalytic domain. H384 acts as the Proton donor/acceptor in catalysis. The active-site Nucleophile is C403.

It belongs to the YkuD family.

It is found in the membrane. Its pathway is cell wall biogenesis; peptidoglycan biosynthesis. This is Putative L,D-transpeptidase HI_1667 from Haemophilus influenzae (strain ATCC 51907 / DSM 11121 / KW20 / Rd).